Consider the following 150-residue polypeptide: Endoribonuclease YbeY (150 aa).

Residues His113, His117, and His123 each contribute to the Zn(2+) site.

Belongs to the endoribonuclease YbeY family. The cofactor is Zn(2+).

The protein localises to the cytoplasm. In terms of biological role, single strand-specific metallo-endoribonuclease involved in late-stage 70S ribosome quality control and in maturation of the 3' terminus of the 16S rRNA. The protein is Endoribonuclease YbeY of Malacoplasma penetrans (strain HF-2) (Mycoplasma penetrans).